Here is a 325-residue protein sequence, read N- to C-terminus: tRNA(Ile)-lysidine synthase (325 aa).

34–39 (SGGADS) contributes to the ATP binding site.

It belongs to the tRNA(Ile)-lysidine synthase family.

It is found in the cytoplasm. It catalyses the reaction cytidine(34) in tRNA(Ile2) + L-lysine + ATP = lysidine(34) in tRNA(Ile2) + AMP + diphosphate + H(+). Its function is as follows. Ligates lysine onto the cytidine present at position 34 of the AUA codon-specific tRNA(Ile) that contains the anticodon CAU, in an ATP-dependent manner. Cytidine is converted to lysidine, thus changing the amino acid specificity of the tRNA from methionine to isoleucine. In Rhodococcus opacus (strain B4), this protein is tRNA(Ile)-lysidine synthase.